Consider the following 152-residue polypeptide: Biogenesis of lysosome-related organelles complex 1 subunit 1 (152 aa).

The protein belongs to the BLOC1S1 family. As to quaternary structure, component of the biogenesis of lysosome-related organelles complex-1 (BLOC-1). Interacts with BLOS2 and SNX1. As to expression, expressed in the whole plant (at protein level).

It is found in the cytoplasm. Its subcellular location is the endosome. Functionally, component of the biogenesis of lysosome-related organelles complex-1 (BLOC-1), a complex that mediates the vacuolar degradative transport via the intracellular vesicle trafficking from the endosome to the vacuole. Probably regulates the PIN1 and PIN2 homeostasis through its interaction with SNX1. This Arabidopsis thaliana (Mouse-ear cress) protein is Biogenesis of lysosome-related organelles complex 1 subunit 1 (BLOS1).